A 237-amino-acid polypeptide reads, in one-letter code: Purine nucleoside phosphorylase DeoD-type (237 aa).

Residue H4 coordinates a purine D-ribonucleoside. Phosphate is bound by residues G20, R24, R43, and 87 to 90 (RVGT). Residues 180 to 182 (EME) and 204 to 205 (SD) contribute to the a purine D-ribonucleoside site. D205 functions as the Proton donor in the catalytic mechanism.

It belongs to the PNP/UDP phosphorylase family. In terms of assembly, homohexamer; trimer of homodimers.

The enzyme catalyses a purine D-ribonucleoside + phosphate = a purine nucleobase + alpha-D-ribose 1-phosphate. The catalysed reaction is a purine 2'-deoxy-D-ribonucleoside + phosphate = a purine nucleobase + 2-deoxy-alpha-D-ribose 1-phosphate. Its function is as follows. Catalyzes the reversible phosphorolytic breakdown of the N-glycosidic bond in the beta-(deoxy)ribonucleoside molecules, with the formation of the corresponding free purine bases and pentose-1-phosphate. This Streptococcus suis (strain 98HAH33) protein is Purine nucleoside phosphorylase DeoD-type.